The primary structure comprises 190 residues: Recombination protein RecR (190 aa).

The segment at 58-73 (CTQCGGLSEDELCYIC) adopts a C4-type zinc-finger fold. Residues 81–167 (SSLCLVESAR…HFTKIAQGVP (87 aa)) enclose the Toprim domain.

The protein belongs to the RecR family.

Its function is as follows. May play a role in DNA repair. It seems to be involved in an RecBC-independent recombinational process of DNA repair. It may act with RecF and RecO. This is Recombination protein RecR from Nitratiruptor sp. (strain SB155-2).